A 540-amino-acid polypeptide reads, in one-letter code: Telomerase Cajal body protein 1 (540 aa).

The span at 1 to 10 shows a compositional bias: pro residues; that stretch reads MKTPEAPPLA. Residues 1–126 form a disordered region; that stretch reads MKTPEAPPLA…GEDVEGVSEE (126 aa). Phosphoserine occurs at positions 26, 30, 54, 64, 85, and 90. The segment covering 116–126 has biased composition (acidic residues); the sequence is PGEDVEGVSEE. WD repeat units lie at residues 158–197, 213–258, 263–304, 314–355, 356–396, and 402–441; these read QPEN…YNEG, EGDT…LRAS, NHLD…RDCE, GQSG…ALLG, GHQG…HPLW, and VTTN…LESK. T480 is modified (phosphothreonine). Position 482 is a phosphoserine (S482). Positions 520-540 are disordered; it reads SDAHQEEMGQGRTEGGGGEFT. Residues 531–540 show a composition bias toward gly residues; it reads RTEGGGGEFT.

It belongs to the TCAB1 family. In terms of assembly, component of the telomerase holoenzyme complex composed of one molecule of TERT, one molecule of WRAP53/TCAB1, two molecules of H/ACA ribonucleoprotein complex subunits DKC1, NOP10, NHP2 and GAR1, and a telomerase RNA template component (TERC). The telomerase holoenzyme complex is associated with TEP1, SMG6/EST1A and POT1. Interacts with the chaperonin-containing T-complex (TRiC) complex; which mediates the folding of WRAP53/TCAB1. Interacts with COIL. Interacts with SMN1. Interacts with RNF8. Interacts with histone H2AX. Post-translationally, phosphorylated at Ser-64 by ATM in response to DNA damage, promoting its interaction with histone H2AX and localization to sites of DNA double-strand breaks.

It is found in the nucleus. The protein localises to the cajal body. It localises to the chromosome. Its subcellular location is the telomere. In terms of biological role, RNA chaperone that plays a key role in telomere maintenance and RNA localization to Cajal bodies. Specifically recognizes and binds the Cajal body box (CAB box) present in both small Cajal body RNAs (scaRNAs) and telomerase RNA template component (TERC). Essential component of the telomerase holoenzyme complex, a ribonucleoprotein complex essential for the replication of chromosome termini that elongates telomeres in most eukaryotes. In the telomerase holoenzyme complex, required to stimulate the catalytic activity of the complex. Acts by specifically binding the CAB box of the TERC RNA and controlling the folding of the CR4/CR5 region of the TERC RNA, a critical step for telomerase activity. In addition, also controls telomerase holoenzyme complex localization to Cajal body. During S phase, required for delivery of TERC to telomeres during S phase and for telomerase activity. In addition to its role in telomere maintenance, also required for Cajal body formation, probably by mediating localization of scaRNAs to Cajal bodies. Also plays a role in DNA repair: phosphorylated by ATM in response to DNA damage and relocalizes to sites of DNA double-strand breaks to promote the repair of DNA double-strand breaks. Acts by recruiting the ubiquitin ligase RNF8 to DNA breaks and promote both homologous recombination (HR) and non-homologous end joining (NHEJ). This Bos taurus (Bovine) protein is Telomerase Cajal body protein 1.